A 92-amino-acid chain; its full sequence is Protein 10 (92 aa).

Residues 18 to 29 (FMQKYDKNSDQH) enclose the EF-hand domain.

The protein belongs to the calbindin family. In terms of tissue distribution, brain.

In Cavia porcellus (Guinea pig), this protein is Protein 10.